The primary structure comprises 274 residues: 2,3,4,5-tetrahydropyridine-2,6-dicarboxylate N-succinyltransferase (274 aa).

Residues R104 and D141 each contribute to the substrate site.

This sequence belongs to the transferase hexapeptide repeat family. In terms of assembly, homotrimer.

It localises to the cytoplasm. The catalysed reaction is (S)-2,3,4,5-tetrahydrodipicolinate + succinyl-CoA + H2O = (S)-2-succinylamino-6-oxoheptanedioate + CoA. It functions in the pathway amino-acid biosynthesis; L-lysine biosynthesis via DAP pathway; LL-2,6-diaminopimelate from (S)-tetrahydrodipicolinate (succinylase route): step 1/3. The protein is 2,3,4,5-tetrahydropyridine-2,6-dicarboxylate N-succinyltransferase of Shewanella baltica (strain OS155 / ATCC BAA-1091).